The following is a 1433-amino-acid chain: Pleckstrin homology domain-containing family H member 1 (1433 aa).

Residues 40–174 (NIRHLLAERM…QILMLQDKLQ (135 aa)) adopt a coiled-coil conformation. Disordered stretches follow at residues 247-346 (DKAD…LSPP) and 552-634 (SSVP…TSSY). A compositionally biased stretch (polar residues) spans 252–266 (PKSSQDGVDATSTVK). Over residues 279–299 (MRDRAMGGASDRDHSSDELNS) the composition is skewed to basic and acidic residues. A compositionally biased stretch (low complexity) spans 308–318 (SSSSSSSSSSS). Residues 332–343 (TPTPKSPPPVSL) are compositionally biased toward pro residues. Positions 557-567 (PDDDSGSEDDS) are enriched in acidic residues. Positions 568-578 (SSLASLHTSTL) are enriched in low complexity. Polar residues predominate over residues 597-606 (VSTSSISSES). 2 PH domains span residues 643–737 (TLEK…NVLK) and 751–859 (KPTA…VAAG). A MyTH4 domain is found at 896 to 1050 (FSKEGLRYPL…PSRMEILSIL (155 aa)). One can recognise an FERM domain in the interval 1061–1392 (FSIPVHFMNN…SYINYWTSSL (332 aa)).

Critical component of the guidance pathway underlying endothelial cell migration and blood vessel patterning. Involved in mediating membrane localization of ephrin proteins, which have been shown to provide guidance cues for endothelial cell migration. In Danio rerio (Zebrafish), this protein is Pleckstrin homology domain-containing family H member 1 (plekhh1).